A 327-amino-acid polypeptide reads, in one-letter code: Phosphate acyltransferase (327 aa).

Belongs to the PlsX family. In terms of assembly, homodimer. Probably interacts with PlsY.

It localises to the cytoplasm. It carries out the reaction a fatty acyl-[ACP] + phosphate = an acyl phosphate + holo-[ACP]. The protein operates within lipid metabolism; phospholipid metabolism. Catalyzes the reversible formation of acyl-phosphate (acyl-PO(4)) from acyl-[acyl-carrier-protein] (acyl-ACP). This enzyme utilizes acyl-ACP as fatty acyl donor, but not acyl-CoA. The protein is Phosphate acyltransferase of Thermotoga neapolitana (strain ATCC 49049 / DSM 4359 / NBRC 107923 / NS-E).